Consider the following 346-residue polypeptide: MRRLGLSLHHDTSPSFAALACNQRPPPNGTVHACSKSRPPQLEPGKVGKKPIKKTMRIARIPTSIPPHLRLPLDLSAVSPMGSASEHDVREHLLDVDGVGEEGAAAAAGPKIRVRGLTRRSEARGEEILRGVDLDVPRGVVVGVIGPSGSGKSTLLRALNRLWEPAPGAVLLDGVDICGIDVLALRRKVGMLFQLPAMFDGTVADNVRYGPQLQGKKLTDAEVQSLLSLADLDPALCSKPASELSVGQAQRVALARTLANDPEVLLLDEPTSALDPISTQNIEEAIVRLKKTRGLTTVMVSHSVKQIQRIADLVCLLVAGEVVEVLPPSELSEAKHPMARRFLELS.

Residues 23–48 (QRPPPNGTVHACSKSRPPQLEPGKVG) form a disordered region. Residues 112-344 (IRVRGLTRRS…KHPMARRFLE (233 aa)) enclose the ABC transporter domain. Residue 146–153 (GPSGSGKS) coordinates ATP.

It belongs to the ABC transporter superfamily. ABCI family. In terms of assembly, interacts with STAR2. In terms of tissue distribution, expressed in roots.

The protein localises to the membrane. Functionally, associates with STAR2 to form a functional transmembrane ABC transporter required for detoxification of aluminum (Al) in roots. Can specifically transport UDP-glucose. This chain is Protein STAR1, found in Oryza sativa subsp. japonica (Rice).